A 489-amino-acid chain; its full sequence is Rhamnulokinase (489 aa).

Position 13–17 (13–17 (ASSGR)) interacts with ATP. A disulfide bond links C68 and C222. Substrate-binding positions include G83 and 236–238 (HDT). D237 serves as the catalytic Proton acceptor. An ATP-binding site is contributed by T259. N296 lines the substrate pocket. Residue Q304 coordinates ATP. Residues C353 and C370 are joined by a disulfide bond. ATP is bound at residue G402. C413 and C417 are joined by a disulfide.

This sequence belongs to the rhamnulokinase family. Requires Mg(2+) as cofactor.

The catalysed reaction is L-rhamnulose + ATP = L-rhamnulose 1-phosphate + ADP + H(+). Its pathway is carbohydrate degradation; L-rhamnose degradation; glycerone phosphate from L-rhamnose: step 2/3. Involved in the catabolism of L-rhamnose (6-deoxy-L-mannose). Catalyzes the transfer of the gamma-phosphate group from ATP to the 1-hydroxyl group of L-rhamnulose to yield L-rhamnulose 1-phosphate. The chain is Rhamnulokinase from Enterobacter sp. (strain 638).